Consider the following 97-residue polypeptide: Large ribosomal subunit protein uL23 (97 aa).

It belongs to the universal ribosomal protein uL23 family. Part of the 50S ribosomal subunit. Contacts protein L29, and trigger factor when it is bound to the ribosome.

One of the early assembly proteins it binds 23S rRNA. One of the proteins that surrounds the polypeptide exit tunnel on the outside of the ribosome. Forms the main docking site for trigger factor binding to the ribosome. This is Large ribosomal subunit protein uL23 from Anaeromyxobacter dehalogenans (strain 2CP-1 / ATCC BAA-258).